The following is a 211-amino-acid chain: WAP four-disulfide core domain protein 1 (211 aa).

Residues 1 to 23 (MGNCGRKVLRALSFLLLLGSSSA) form the signal peptide. The WAP domain maps to 50-99 (RQPHADRCPPPPRTLPPGACQATRCQADSECPRHRRCCYNGCAYACLEAV). Intrachain disulfides connect cysteine 57/cysteine 87, cysteine 69/cysteine 91, cysteine 74/cysteine 86, and cysteine 80/cysteine 95. Basic and acidic residues predominate over residues 182 to 198 (VLRQRLHKEYPEGDSKN). The segment at 182–211 (VLRQRLHKEYPEGDSKNVAEPGKGQQRHFP) is disordered.

It is found in the secreted. Functionally, has growth inhibitory activity. This is WAP four-disulfide core domain protein 1 (Wfdc1) from Mus musculus (Mouse).